Reading from the N-terminus, the 161-residue chain is Cyclic pyranopterin monophosphate synthase (161 aa).

Residues 75-77 (LCH) and 113-114 (ME) each bind substrate. Asp128 is a catalytic residue.

This sequence belongs to the MoaC family. Homohexamer; trimer of dimers.

It carries out the reaction (8S)-3',8-cyclo-7,8-dihydroguanosine 5'-triphosphate = cyclic pyranopterin phosphate + diphosphate. Its pathway is cofactor biosynthesis; molybdopterin biosynthesis. Its function is as follows. Catalyzes the conversion of (8S)-3',8-cyclo-7,8-dihydroguanosine 5'-triphosphate to cyclic pyranopterin monophosphate (cPMP). The polypeptide is Cyclic pyranopterin monophosphate synthase (Enterobacter sp. (strain 638)).